The sequence spans 287 residues: Putative sugar uptake protein EF_0928 (287 aa).

The next 10 helical transmembrane spans lie at 5–27 (IALV…GGSA), 32–49 (LGMT…FFVI), 53–71 (LTTA…WSLG), 84–106 (VSVG…GAVF), 116–134 (FVVG…YLTA), 155–177 (IRAL…ATGL), 182–200 (IILP…FAFK), 207–229 (FVWM…LLTM), 234–256 (LAIS…IFLL), and 265–284 (MFYV…LLGY).

This sequence belongs to the GRP transporter (TC 2.A.7.5) family.

Its subcellular location is the cell membrane. The polypeptide is Putative sugar uptake protein EF_0928 (Enterococcus faecalis (strain ATCC 700802 / V583)).